Reading from the N-terminus, the 241-residue chain is Large ribosomal subunit protein uL3 (241 aa).

Disordered stretches follow at residues 140–168 and 216–241; these read SHRS…HMGD and APKP…EEGA. Gln151 is subject to N5-methylglutamine.

It belongs to the universal ribosomal protein uL3 family. As to quaternary structure, part of the 50S ribosomal subunit. Forms a cluster with proteins L14 and L19. Methylated by PrmB.

In terms of biological role, one of the primary rRNA binding proteins, it binds directly near the 3'-end of the 23S rRNA, where it nucleates assembly of the 50S subunit. The chain is Large ribosomal subunit protein uL3 from Xanthobacter autotrophicus (strain ATCC BAA-1158 / Py2).